A 102-amino-acid chain; its full sequence is Small ribosomal subunit protein uS10 (102 aa).

This sequence belongs to the universal ribosomal protein uS10 family. In terms of assembly, part of the 30S ribosomal subunit.

Its function is as follows. Involved in the binding of tRNA to the ribosomes. In Frankia alni (strain DSM 45986 / CECT 9034 / ACN14a), this protein is Small ribosomal subunit protein uS10.